Consider the following 103-residue polypeptide: Large ribosomal subunit protein uL24 (103 aa).

This sequence belongs to the universal ribosomal protein uL24 family. As to quaternary structure, part of the 50S ribosomal subunit.

One of two assembly initiator proteins, it binds directly to the 5'-end of the 23S rRNA, where it nucleates assembly of the 50S subunit. Its function is as follows. One of the proteins that surrounds the polypeptide exit tunnel on the outside of the subunit. This Bacillus mycoides (strain KBAB4) (Bacillus weihenstephanensis) protein is Large ribosomal subunit protein uL24.